A 290-amino-acid chain; its full sequence is Protein-glutamine deamidase Cif (290 aa).

The disordered stretch occupies residues 1-26 (MKISPNTISPSQSDPRMSTNVSQRSR). Residues Cys-117, His-173, and Gln-193 contribute to the active site.

It belongs to the Cif family.

It localises to the secreted. The protein localises to the host nucleus. It carries out the reaction L-glutaminyl-[protein] + H2O = L-glutamyl-[protein] + NH4(+). Its function is as follows. Protein-glutamine deamidase effector that inhibits the host cell cycle and other key cellular processes such as the actin network and programmed-cell death. Acts by mediating the side chain deamidation of 'Gln-40' of host NEDD8, converting it to glutamate, thereby abolishing the activity of cullin-RING-based E3 ubiquitin-protein ligase complexes (CRL complexes). Inactivation of CRL complexes prevents ubiquitination and subsequent degradation of the cyclin-dependent kinase inhibitors CDKN1A/p21 and CDKN1B/p27, leading to G1 and G2 cell cycle arrests in host cells. Also able to catalyze deamidation of 'Gln-40' of host ubiquitin in vitro; however, NEDD8 constitutes the preferred substrate in vivo. This is Protein-glutamine deamidase Cif from Yersinia pseudotuberculosis serotype O:3 (strain YPIII).